A 438-amino-acid chain; its full sequence is 3-phosphoshikimate 1-carboxyvinyltransferase (438 aa).

K21, S22, and R26 together coordinate 3-phosphoshikimate. K21 is a binding site for phosphoenolpyruvate. Positions 93 and 121 each coordinate phosphoenolpyruvate. 3-phosphoshikimate is bound by residues S166, S167, Q168, S194, D324, and K351. Q168 is a binding site for phosphoenolpyruvate. Residue D324 is the Proton acceptor of the active site. R355 and R395 together coordinate phosphoenolpyruvate.

The protein belongs to the EPSP synthase family. In terms of assembly, monomer.

Its subcellular location is the cytoplasm. The catalysed reaction is 3-phosphoshikimate + phosphoenolpyruvate = 5-O-(1-carboxyvinyl)-3-phosphoshikimate + phosphate. The protein operates within metabolic intermediate biosynthesis; chorismate biosynthesis. Catalyzes the transfer of the enolpyruvyl moiety of phosphoenolpyruvate (PEP) to the 5-hydroxyl of shikimate-3-phosphate (S3P) to produce enolpyruvyl shikimate-3-phosphate and inorganic phosphate. In Methanobrevibacter smithii (strain ATCC 35061 / DSM 861 / OCM 144 / PS), this protein is 3-phosphoshikimate 1-carboxyvinyltransferase.